Consider the following 450-residue polypeptide: Chromosomal replication initiator protein DnaA (450 aa).

The segment at 1–77 (MTENEQIFWN…EVYNAQIAVD (77 aa)) is domain I, interacts with DnaA modulators. Residues 77–109 (DYVYEDDLMIEQQHQGQQGYTEQAFQQLPAVQS) form a domain II region. Positions 110–328 (DLNPKYSFDN…GALKDISLVA (219 aa)) are domain III, AAA+ region. Positions 154, 156, 157, and 158 each coordinate ATP. Positions 329-450 (NFKQIDTITV…EIETIKNKIK (122 aa)) are domain IV, binds dsDNA.

The protein belongs to the DnaA family. In terms of assembly, oligomerizes as a right-handed, spiral filament on DNA at oriC.

It is found in the cytoplasm. Functionally, plays an essential role in the initiation and regulation of chromosomal replication. ATP-DnaA binds to the origin of replication (oriC) to initiate formation of the DNA replication initiation complex once per cell cycle. Binds the DnaA box (a 9 base pair repeat at the origin) and separates the double-stranded (ds)DNA. Forms a right-handed helical filament on oriC DNA; dsDNA binds to the exterior of the filament while single-stranded (ss)DNA is stabiized in the filament's interior. The ATP-DnaA-oriC complex binds and stabilizes one strand of the AT-rich DNA unwinding element (DUE), permitting loading of DNA polymerase. After initiation quickly degrades to an ADP-DnaA complex that is not apt for DNA replication. Binds acidic phospholipids. This Streptococcus equi subsp. equi (strain 4047) protein is Chromosomal replication initiator protein DnaA.